The following is a 409-amino-acid chain: tRNA-specific 2-thiouridylase MnmA (409 aa).

ATP contacts are provided by residues 40–47 (GLSGGVDS) and Leu66. Cys127 acts as the Nucleophile in catalysis. An intrachain disulfide couples Cys127 to Cys237. Residue Gly152 coordinates ATP. Residues 187–189 (KDQ) are interaction with tRNA. The active-site Cysteine persulfide intermediate is the Cys237. The tract at residues 342–343 (RY) is interaction with tRNA.

It belongs to the MnmA/TRMU family.

It is found in the cytoplasm. The catalysed reaction is S-sulfanyl-L-cysteinyl-[protein] + uridine(34) in tRNA + AH2 + ATP = 2-thiouridine(34) in tRNA + L-cysteinyl-[protein] + A + AMP + diphosphate + H(+). In terms of biological role, catalyzes the 2-thiolation of uridine at the wobble position (U34) of tRNA, leading to the formation of s(2)U34. The protein is tRNA-specific 2-thiouridylase MnmA of Prochlorococcus marinus (strain MIT 9313).